We begin with the raw amino-acid sequence, 113 residues long: Cholecystoxin (113 aa).

The signal sequence occupies residues 1 to 20 (MYGGICLCVLLAVLAISSSG). Positions 21-79 (QHISRSLNGNSLAAAIEQNFPEKHRPARTPDSNQRVESNIDEKANLGVLLARYLQKARR) are excised as a propeptide. The disordered stretch occupies residues 77–97 (ARRGTNGKPPDPKKESQDYLG). Tyrosine 95 bears the Sulfotyrosine mark. Phenylalanine 101 is modified (phenylalanine amide). Residues 102–113 (GRRSAEEYEYSS) constitute a propeptide that is removed on maturation.

Belongs to the gastrin/cholecystokinin family. Expressed by the mandibular venom gland.

The protein localises to the secreted. Cholecystokinin-22: hypotensive neuropeptide that binds cholecystokinin receptor type A receptor (CCKAR). Functionally, cholecystokinin-8: hypotensive neuropeptide that binds cholecystokinin receptor type A receptor (CCKAR). The polypeptide is Cholecystoxin (Varanus varius (Lace monitor lizard)).